The primary structure comprises 499 residues: Protein SENSITIVE TO PROTON RHIZOTOXICITY 1 (499 aa).

Residues Met-1–Thr-31 are disordered. The C2H2-type 1 zinc-finger motif lies at His-244–His-266. The segment at Lys-354–His-385 adopts a C2H2-type 2; atypical zinc-finger fold. A disordered region spans residues Pro-390–Met-436. Polar residues-rich tracts occupy residues Pro-396–Gly-415 and Gly-422–Gly-435.

In terms of tissue distribution, expressed in roots (e.g. root tips and lateral roots), leaves, flowers (e.g. stigma, sepal, anther, and filament), stems, siliques and cotyledons.

The protein resides in the nucleus. Its function is as follows. Probable transcription factor. Together with STOP2, plays a critical role in tolerance to major stress factors in acid soils such as proton H(+) and aluminum ion Al(3+). Required for the expression of genes in response to acidic stress (e.g. ALMT1 and MATE), and Al-activated citrate exudation. This chain is Protein SENSITIVE TO PROTON RHIZOTOXICITY 1, found in Arabidopsis thaliana (Mouse-ear cress).